The chain runs to 483 residues: MGLFDFSVKELHDKLVKKEISPFDLVSESFNRIESVEDKVGSFITLNKEAAFGVAEELGDAGIDPNNMLSGLPIGIKDNIVTKNLRTTAASKILENFDPIYDATVVSKLKNAQTINIGKLNMDEFAMGSSTETSYFHKTHNPWDLSRVPGGSSGGSASAVAAGEVLFSLGSDTGGSIRQPAAFCGVVGMKPTYGRVSRFGLIAFASSLDQIGPITKNVEDNAYLLEAISGLDANDSTSINQPVERFSNSLTGDIKGLRIGVPKEYLGEGVDPGVKQAVLDALKTLEKLGATWDEVSLPHSEYGVASYYILASSEASSNLSRFDGVRYGYRSPNATTLEELYTKTRSEGFGDEVKRRIMLGTYALSSGYYDAYYKKAQQARTLIKQDFVNVFENYDVIIGPSSPTTAFKIDGMINDPITMYSNDILTVPINLAGVPAISVPCGFSDGLPVGLQIIGNYFEESLLYKVAHAFEQETTFHKEKPNL.

Residues lysine 77 and serine 152 each act as charge relay system in the active site. Residue serine 176 is the Acyl-ester intermediate of the active site.

The protein belongs to the amidase family. GatA subfamily. Heterotrimer of A, B and C subunits.

The enzyme catalyses L-glutamyl-tRNA(Gln) + L-glutamine + ATP + H2O = L-glutaminyl-tRNA(Gln) + L-glutamate + ADP + phosphate + H(+). Functionally, allows the formation of correctly charged Gln-tRNA(Gln) through the transamidation of misacylated Glu-tRNA(Gln) in organisms which lack glutaminyl-tRNA synthetase. The reaction takes place in the presence of glutamine and ATP through an activated gamma-phospho-Glu-tRNA(Gln). The polypeptide is Glutamyl-tRNA(Gln) amidotransferase subunit A (Listeria monocytogenes serotype 4b (strain CLIP80459)).